The primary structure comprises 156 residues: SCP2 sterol-binding domain-containing protein 1 (156 aa).

The SCP2 domain occupies 44–156 (TVPVFEDISQ…ERVFKDWAKW (113 aa)).

In Bos taurus (Bovine), this protein is SCP2 sterol-binding domain-containing protein 1 (SCP2D1).